The primary structure comprises 211 residues: MPAVRIKICGITRVEDALAAAAAGADAIGLVFYAKSPRAVDIHRAREIVRALPPFVTSVGLFVNASRCELGEILDAVPLDLLQFHGDERAEDCEGHRRPYLKALRMKPGDDIVGRAAAYPGAAGILLDTYVEGVPGGTGAAFDWSLVPADLGKPLVLAGGLTPDNVGRAVEQVKPYAVDVSGGVEASKGIKDAARVRAFVDAVRSRRRDET.

The protein belongs to the TrpF family.

It carries out the reaction N-(5-phospho-beta-D-ribosyl)anthranilate = 1-(2-carboxyphenylamino)-1-deoxy-D-ribulose 5-phosphate. The protein operates within amino-acid biosynthesis; L-tryptophan biosynthesis; L-tryptophan from chorismate: step 3/5. This Pseudomonas aeruginosa (strain UCBPP-PA14) protein is N-(5'-phosphoribosyl)anthranilate isomerase.